Reading from the N-terminus, the 205-residue chain is Holliday junction branch migration complex subunit RuvA (205 aa).

Residues 1-64 (MIGRLRGIIL…EDAQLLYGFN (64 aa)) form a domain I region. The segment at 65 to 143 (DKQERALFRE…GLNGDLFNNT (79 aa)) is domain II. Positions 144–156 (GDIQLPASNSSQI) are flexible linker. The tract at residues 157–205 (SDADIEAEAASALVALGYKPQEASRLVSKIAKPGADCETLIRDALRAAL) is domain III.

Belongs to the RuvA family. As to quaternary structure, homotetramer. Forms an RuvA(8)-RuvB(12)-Holliday junction (HJ) complex. HJ DNA is sandwiched between 2 RuvA tetramers; dsDNA enters through RuvA and exits via RuvB. An RuvB hexamer assembles on each DNA strand where it exits the tetramer. Each RuvB hexamer is contacted by two RuvA subunits (via domain III) on 2 adjacent RuvB subunits; this complex drives branch migration. In the full resolvosome a probable DNA-RuvA(4)-RuvB(12)-RuvC(2) complex forms which resolves the HJ.

Its subcellular location is the cytoplasm. In terms of biological role, the RuvA-RuvB-RuvC complex processes Holliday junction (HJ) DNA during genetic recombination and DNA repair, while the RuvA-RuvB complex plays an important role in the rescue of blocked DNA replication forks via replication fork reversal (RFR). RuvA specifically binds to HJ cruciform DNA, conferring on it an open structure. The RuvB hexamer acts as an ATP-dependent pump, pulling dsDNA into and through the RuvAB complex. HJ branch migration allows RuvC to scan DNA until it finds its consensus sequence, where it cleaves and resolves the cruciform DNA. The chain is Holliday junction branch migration complex subunit RuvA from Yersinia enterocolitica serotype O:8 / biotype 1B (strain NCTC 13174 / 8081).